The chain runs to 124 residues: Small ribosomal subunit protein bS6 (124 aa).

It belongs to the bacterial ribosomal protein bS6 family.

Binds together with bS18 to 16S ribosomal RNA. The polypeptide is Small ribosomal subunit protein bS6 (Rippkaea orientalis (strain PCC 8801 / RF-1) (Cyanothece sp. (strain PCC 8801))).